A 234-amino-acid polypeptide reads, in one-letter code: Polycomb group RING finger protein 5-A (234 aa).

Residues 18–57 form an RING-type zinc finger; the sequence is CSICRGYLIKPTAVTECLHTFCKSCIVQHFEESNECPECG. The tract at residues 97-130 is disordered; that stretch reads FWRKHKIKSNGEDGPRAKKSRLSGEDDDGNGGDY.

As to quaternary structure, component of a PRC1-like complex.

It localises to the nucleus. Its function is as follows. Component of Polycomb group (PcG) multiprotein complexes; the complex class is required to maintain the transcriptionally repressive state of some genes. This Danio rerio (Zebrafish) protein is Polycomb group RING finger protein 5-A.